The primary structure comprises 192 residues: Fe/S biogenesis protein NfuA (192 aa).

[4Fe-4S] cluster is bound by residues C149 and C152.

This sequence belongs to the NfuA family. As to quaternary structure, homodimer. [4Fe-4S] cluster serves as cofactor.

Functionally, involved in iron-sulfur cluster biogenesis. Binds a 4Fe-4S cluster, can transfer this cluster to apoproteins, and thereby intervenes in the maturation of Fe/S proteins. Could also act as a scaffold/chaperone for damaged Fe/S proteins. In Shewanella sediminis (strain HAW-EB3), this protein is Fe/S biogenesis protein NfuA.